A 184-amino-acid polypeptide reads, in one-letter code: ATP synthase subunit b, chloroplastic (184 aa).

Residues 27-49 (LATNLINLSVVIGVLIFFGKGVL) form a helical membrane-spanning segment.

The protein belongs to the ATPase B chain family. As to quaternary structure, F-type ATPases have 2 components, F(1) - the catalytic core - and F(0) - the membrane proton channel. F(1) has five subunits: alpha(3), beta(3), gamma(1), delta(1), epsilon(1). F(0) has four main subunits: a(1), b(1), b'(1) and c(10-14). The alpha and beta chains form an alternating ring which encloses part of the gamma chain. F(1) is attached to F(0) by a central stalk formed by the gamma and epsilon chains, while a peripheral stalk is formed by the delta, b and b' chains.

It is found in the plastid. It localises to the chloroplast thylakoid membrane. Functionally, f(1)F(0) ATP synthase produces ATP from ADP in the presence of a proton or sodium gradient. F-type ATPases consist of two structural domains, F(1) containing the extramembraneous catalytic core and F(0) containing the membrane proton channel, linked together by a central stalk and a peripheral stalk. During catalysis, ATP synthesis in the catalytic domain of F(1) is coupled via a rotary mechanism of the central stalk subunits to proton translocation. In terms of biological role, component of the F(0) channel, it forms part of the peripheral stalk, linking F(1) to F(0). This chain is ATP synthase subunit b, chloroplastic, found in Jasminum nudiflorum (Winter jasmine).